Consider the following 596-residue polypeptide: Chaperone protein DnaK (596 aa).

Threonine 180 carries the post-translational modification Phosphothreonine; by autocatalysis.

Belongs to the heat shock protein 70 family.

Functionally, acts as a chaperone. This chain is Chaperone protein DnaK, found in Thermotoga neapolitana (strain ATCC 49049 / DSM 4359 / NBRC 107923 / NS-E).